Reading from the N-terminus, the 1666-residue chain is Complement C3 (1666 aa).

Positions 1–22 are cleaved as a signal peptide; it reads MGPAAGPSLLLLLLASVSLALG. Phosphoserine is present on residues Ser70, Ser296, and Ser302. 13 disulfide bridges follow: Cys557–Cys821, Cys630–Cys666, Cys698–Cys725, Cys699–Cys732, Cys712–Cys733, Cys878–Cys1517, Cys1106–Cys1163, Cys1363–Cys1493, Cys1394–Cys1462, Cys1510–Cys1515, Cys1522–Cys1593, Cys1540–Cys1664, and Cys1640–Cys1649. The residue at position 676 (Ser676) is a Phosphoserine. The Anaphylatoxin-like domain maps to 698-733; the sequence is CCEDGMRENPMQFSCQRRARYVSLGEACVKAFLDCC. A glycan (N-linked (GlcNAc...) asparagine) is linked at Asn944. At Ser973 the chain carries Phosphoserine. Positions 1015–1018 form a cross-link, isoglutamyl cysteine thioester (Cys-Gln); the sequence is CGEQ. Ser1326 bears the Phosphoserine mark. The NTR domain occupies 1522–1664; the sequence is CFIQLPEKIT…FTENMVVFGC (143 aa). Ser1576 is subject to Phosphoserine. The N-linked (GlcNAc...) asparagine glycan is linked to Asn1620. Residues 1637 to 1662 are interaction with CFP/properdin; the sequence is AEECQDEENQQQCQDLGTFTENMVVF.

In absence of complement activation, the C3 precursor is first processed by the removal of 4 Arg residues, forming two chains, beta and alpha, linked by a disulfide bond. As to quaternary structure, complement C3b is composed of complement C3b and complement C3 beta chains that are associated via disulfide bonds. Non-enzymatic component of the C5 convertase, also named C4bC2bC3b, composed of the serine protease complement C2b (C2), complement C3b, as well as complement C4b (C4). Non-enzymatic component of the C5 convertase of the alternative complement pathways composed of the serine protease complement CFB and complement C3b. Interacts with CFP; interaction takes place together with CFB in the alternative complement system and allows the complex to become active. Interacts with CR1 (via Sushi 8 and Sushi 9 domains). Interacts with CFH. In terms of assembly, interacts with CFH. Interacts with CR2. During pregnancy, C3dg exists as a complex (probably a 2:2:2 heterohexamer) with AGT and the proform of PRG2. Interacts with CR2 (via the N-terminal Sushi domains 1 and 2). In terms of processing, C3 precursor is first processed by the removal of 4 Arg residues, forming two chains, beta and alpha, linked by a disulfide bond. During activation of the complement systems, the alpha chain is cleaved into C3a and C3b by the C3 convertase: C3b stays linked to the beta chain, while C3a is released in the plasma. The alpha chain is cleaved by the serine protease complement C2b component of the C3 convertase to generate C3a and C3b following activation by the classical, lectin and GZMK complement systems. The alpha chain is cleaved by CFB component of the C3 convertase to generate C3a and C3b following activation by the alternative complement system. Post-translationally, C3a is further processed by carboxypeptidases to release the C-terminal arginine residue generating the acylation stimulating protein (ASP). Levels of ASP are increased in adipocytes in the postprandial period and by insulin and dietary chylomicrons. Complement C3b is rapidly split in two positions by factor I (CFI) and a cofactor (CFH) to form iC3b (inactivated C3b) and C3f which is released. CFI and CFH catalyze proteolytic degradation of already-deposited complement C3b. Then iC3b is slowly cleaved (possibly by CFI) to form C3c (beta chain + alpha' chain fragment 1 + alpha' chain fragment 2), C3dg and C3f. Other proteases produce other fragments such as C3d or C3g. In terms of processing, upon activation, the internal thioester bond reacts with carbohydrate antigens on the target surface to form amide or ester bonds, leading to covalent association with the surface of pathogens. Post-translationally, complement C3b interacts with complement C4b via a thioester linkage. Phosphorylated by FAM20C in the extracellular medium.

The protein resides in the secreted. Its subcellular location is the cell surface. With respect to regulation, complement activation is inhibited by VSIG4. Precursor of non-enzymatic components of the classical, alternative, lectin and GZMK complement pathways, which consist in a cascade of proteins that leads to phagocytosis and breakdown of pathogens and signaling that strengthens the adaptive immune system. In terms of biological role, non-enzymatic component of C5 convertase. Generated following cleavage by C3 convertase, it covalently attaches to the surface of pathogens, where it acts as an opsonin that marks the surface of antigens for removal. Complement C3b binds covalently via its reactive thioester, to cell surface carbohydrates or immune aggregates. Together with complement C4b, it then recruits the serine protease complement C2b to form the C5 convertase, which cleaves and activate C5, the next component of the complement pathways. In the alternative complement pathway, recruits the serine protease CFB to form the C5 convertase that cleaves and activates C5. Its function is as follows. Mediator of local inflammatory process released following cleavage by C3 convertase. Acts by binding to its receptor, C3AR1, activating G protein-coupled receptor signaling, promoting the phosphorylation, ARRB2-mediated internalization and endocytosis of C3AR1. C3a anaphylatoxin stimulates the activation of immune cells such as mast cells and basophilic leukocytes to release inflammation agents, such as cytokines, chemokines and histamine, which promote inflammation development. Also acts as potent chemoattractant for the migration of macrophages and neutrophils to the inflamed tissues, resulting in neutralization of the inflammatory triggers by multiple ways, such as phagocytosis and generation of reactive oxidants. Functionally, adipogenic hormone that stimulates triglyceride synthesis and glucose transport in adipocytes, regulating fat storage and playing a role in postprandial triglyceride clearance. Appears to stimulate triglyceride synthesis via activation of the PLC, MAPK and AKT signaling pathways. Acts by binding to its receptor, C5AR2, activating G protein-coupled receptor signaling, promoting the phosphorylation, ARRB2-mediated internalization and endocytosis of C5AR2. Acts as a chemoattractant for neutrophils in chronic inflammation. The polypeptide is Complement C3 (Cavia porcellus (Guinea pig)).